The chain runs to 607 residues: Rap1 GTPase-GDP dissociation stimulator 1 (607 aa).

Positions L4–I13 match the Nuclear export signal (NES) motif. ARM repeat units follow at residues G89–G131 and D170–E211. Residues E122 to D170 form a prevents binding to prenylated RHOA region. Position 230 is an N6-acetyllysine (K230). The interval D239 to D255 is interacts with polybasic regions in GTPases. ARM repeat units follow at residues D347–I390, P391–D431, and S479–A519. Residues H379 to M428 form a critical for catalytic activity region.

As to quaternary structure, interacts with RABL3. Interacts with RHOT1. In terms of assembly, interacts with unprenylated RHOA; the interaction is direct. Interacts with RAP1A. Interacts with KRAS. Interacts with RAC1. Interacts with RAP1B. Preferentially interacts with unprenylated GTPases that will become geranylgeranylated. May also interact with prenylated GTPases. Interacts with prenylated RHOA; the interaction is direct and in a 1:1 stoichiometry. Interacts with RAP1A. Interacts with KRAS. Interacts with RAC1. Interacts with RAP1B. Preferentially interacts with prenylated GTPases. Forms covalent cross-links mediated by transglutaminase TGM2, between a glutamine and the epsilon-amino group of a lysine residue, forming homopolymers and heteropolymers.

Its subcellular location is the cytoplasm. It is found in the cytosol. It localises to the endoplasmic reticulum. The protein localises to the mitochondrion. The protein resides in the nucleus. Its function is as follows. Acts as a GEF (guanine nucleotide exchange factor) for the Rho family of small GTP-binding proteins (G proteins) that stimulates the dissociation of GDP to enable subsequent binding of GTP. Additionally, appears to chaperone the processing and/or trafficking of small GTPases containing a C-terminal polybasic region independently of GEF activity. Targets include RAP1A/RAP1B, RHOA, RHOB, RHOC, RAC1 and KRAS. Regulates mitochondrial dynamics by controlling RHOT function to promote mitochondrial fission during high calcium conditions. Able to promote the Ca(2+) release from the endoplasmic reticulum via both inositol trisphosphate (Ins3P) and ryanodine sensitive receptors leading to a enhanced mitochondrial Ca(2+) uptake. In terms of biological role, acts as a GEF (guanine nucleotide exchange factor) for unprenylated RHOA. Chaperones the entry and passage of small GTPases through the prenylation pathway. Recognizes the last amino acid in the GTPase C-terminal CAAX motif with a preference for 'Leu' over 'Met', indicating involvement in the geranylgeranylation pathway. Functionally, acts as a GEF (guanine nucleotide exchange factor) for prenylated RHOA. Acts as a GEF for RHOC. Chaperones the downstream trafficking and/or processing of small newly prenylated GTPases. Escorts RAC1 to the nucleus. The sequence is that of Rap1 GTPase-GDP dissociation stimulator 1 from Homo sapiens (Human).